We begin with the raw amino-acid sequence, 327 residues long: Ornithine carbamoyltransferase, mitochondrial (327 aa).

Carbamoyl phosphate-binding positions include 63–66, Arg114, His141, and Gln144; that span reads STRT. Residues Asn172, Asp236, Ser240, and Met241 each coordinate L-ornithine. Catalysis depends on Cys276, which acts as the Proton acceptor. Residues 276 to 277 and Arg303 contribute to the carbamoyl phosphate site; that span reads CL.

This sequence belongs to the aspartate/ornithine carbamoyltransferase superfamily. OTCase family. As to quaternary structure, interacts with trx2.

It localises to the mitochondrion matrix. It carries out the reaction carbamoyl phosphate + L-ornithine = L-citrulline + phosphate + H(+). The protein operates within amino-acid biosynthesis; L-arginine biosynthesis; L-arginine from L-ornithine and carbamoyl phosphate: step 1/3. Ornithine carbamoyltransferase involved in the synthesis of arginine from glutamate via ornithine and the urea cycle. This Schizosaccharomyces pombe (strain 972 / ATCC 24843) (Fission yeast) protein is Ornithine carbamoyltransferase, mitochondrial (arg3).